A 141-amino-acid chain; its full sequence is Nucleoside diphosphate kinase (141 aa).

ATP-binding residues include lysine 11, phenylalanine 59, arginine 87, threonine 93, arginine 104, and asparagine 114. Residue histidine 117 is the Pros-phosphohistidine intermediate of the active site.

It belongs to the NDK family. In terms of assembly, homotetramer. Mg(2+) is required as a cofactor.

The protein resides in the cytoplasm. It carries out the reaction a 2'-deoxyribonucleoside 5'-diphosphate + ATP = a 2'-deoxyribonucleoside 5'-triphosphate + ADP. The catalysed reaction is a ribonucleoside 5'-diphosphate + ATP = a ribonucleoside 5'-triphosphate + ADP. Its function is as follows. Major role in the synthesis of nucleoside triphosphates other than ATP. The ATP gamma phosphate is transferred to the NDP beta phosphate via a ping-pong mechanism, using a phosphorylated active-site intermediate. This Bordetella avium (strain 197N) protein is Nucleoside diphosphate kinase.